The chain runs to 489 residues: Protein DETOXIFICATION 26 (489 aa).

The next 12 membrane-spanning stretches (helical) occupy residues 42 to 62 (IWYIVGPSIFTGLATYSILII), 75 to 95 (LAAISIINNFTLGFNYGLLLG), 125 to 145 (IILFLCCILLLPMYLFATPIL), 157 to 177 (LTGTIALWVIPVHFAFAFFFP), 190 to 210 (VIAISAGVSLAVHILVCWFFV), 217 to 237 (IIGTMASVNVPWWLNIFILFL), 271 to 291 (IMLCLENWYYKILMLMTGNLV), 300 to 320 (LSICMSVNGWEMMIPLAFFAG), 342 to 362 (IVSITLSLMIGLFFTVIIVIF), 385 to 405 (VLLAFTVLLNSVQPVLSGVAV), 416 to 436 (INLGCYYLIGLPFGLTMGWIF), and 442 to 462 (GIWAGMIFGGTAIQTLILIII).

It belongs to the multi antimicrobial extrusion (MATE) (TC 2.A.66.1) family.

The protein localises to the membrane. The chain is Protein DETOXIFICATION 26 from Arabidopsis thaliana (Mouse-ear cress).